Consider the following 164-residue polypeptide: Transcription elongation factor GreA (164 aa).

This sequence belongs to the GreA/GreB family.

Functionally, necessary for efficient RNA polymerase transcription elongation past template-encoded arresting sites. The arresting sites in DNA have the property of trapping a certain fraction of elongating RNA polymerases that pass through, resulting in locked ternary complexes. Cleavage of the nascent transcript by cleavage factors such as GreA or GreB allows the resumption of elongation from the new 3'terminus. GreA releases sequences of 2 to 3 nucleotides. This Helicobacter acinonychis (strain Sheeba) protein is Transcription elongation factor GreA.